The primary structure comprises 580 residues: V-type proton ATPase catalytic subunit A (580 aa).

209–216 (GAFGCGKT) is an ATP binding site.

This sequence belongs to the ATPase alpha/beta chains family. In terms of assembly, V-ATPase is a heteromultimeric enzyme composed of a peripheral catalytic V1 complex (main components: subunits A, B, C, D, E, and F) attached to an integral membrane V0 proton pore complex (main component: the proteolipid protein).

The catalysed reaction is ATP + H2O + 4 H(+)(in) = ADP + phosphate + 5 H(+)(out). In terms of biological role, catalytic subunit of the peripheral V1 complex of vacuolar ATPase. V-ATPase vacuolar ATPase is responsible for acidifying a variety of intracellular compartments in eukaryotic cells. This chain is V-type proton ATPase catalytic subunit A, found in Hordeum vulgare (Barley).